The chain runs to 160 residues: Growth arrest and DNA damage-inducible protein GADD45 beta (160 aa).

This sequence belongs to the GADD45 family. In terms of assembly, interacts with GADD45GIP1.

Functionally, involved in the regulation of growth and apoptosis. Mediates activation of stress-responsive MTK1/MEKK4 MAPKKK. The chain is Growth arrest and DNA damage-inducible protein GADD45 beta (GADD45B) from Bos taurus (Bovine).